Reading from the N-terminus, the 895-residue chain is Microsomal triglyceride transfer protein large subunit (895 aa).

The N-terminal stretch at 1–18 (MILLAVLFLCFFSSYSAS) is a signal peptide. The Vitellogenin domain maps to 28–659 (LNNERLYKLT…VFQYLGKAGL (632 aa)). A disulfide bridge connects residues C174 and C194.

In terms of assembly, heterodimer; heterodimerizes with the protein disulfide isomerase (P4HB/PDI). Interacts with APOB. Interacts with PRAP1.

It is found in the endoplasmic reticulum. The protein resides in the golgi apparatus. The enzyme catalyses a 1,2-diacyl-sn-glycero-3-phosphocholine(in) = a 1,2-diacyl-sn-glycero-3-phosphocholine(out). The catalysed reaction is a 1,2-diacyl-sn-glycero-3-phosphoethanolamine(in) = a 1,2-diacyl-sn-glycero-3-phosphoethanolamine(out). It carries out the reaction a cholesterol ester(in) = a cholesterol ester(out). It catalyses the reaction a triacyl-sn-glycerol(in) = a triacyl-sn-glycerol(out). In terms of biological role, catalyzes the transport of triglyceride, cholesteryl ester, and phospholipid between phospholipid surfaces. Required for the assembly and secretion of plasma lipoproteins that contain apolipoprotein B. May be involved in regulating cholesteryl ester biosynthesis in cells that produce lipoproteins. In Mesocricetus auratus (Golden hamster), this protein is Microsomal triglyceride transfer protein large subunit (MTTP).